We begin with the raw amino-acid sequence, 436 residues long: 3-ketoacyl-CoA thiolase (436 aa).

Cys99 serves as the catalytic Acyl-thioester intermediate. Catalysis depends on proton acceptor residues His392 and Cys422.

It belongs to the thiolase-like superfamily. Thiolase family. Heterotetramer of two alpha chains (FadJ) and two beta chains (FadI).

It is found in the cytoplasm. The enzyme catalyses an acyl-CoA + acetyl-CoA = a 3-oxoacyl-CoA + CoA. It functions in the pathway lipid metabolism; fatty acid beta-oxidation. Catalyzes the final step of fatty acid oxidation in which acetyl-CoA is released and the CoA ester of a fatty acid two carbons shorter is formed. This chain is 3-ketoacyl-CoA thiolase, found in Escherichia coli (strain 55989 / EAEC).